A 723-amino-acid polypeptide reads, in one-letter code: Nuclear intron maturase 3, mitochondrial (723 aa).

The transit peptide at 1–26 (MVLRLRVHSFYNRGISFLVSSSLRNL) directs the protein to the mitochondrion. The segment at 532 to 597 (VSAPEELVRK…HYTKDLRVSD (66 aa)) is intron maturase type-2; degenerate. A THAP-type zinc finger spans residues 646–700 (CAASFCERSDTIMHRVHLLQNRLHINPLDEEKWVPGMGTIHSALNRKCLPLCSTH).

Belongs to the plant nuclear intron maturase (nMat) family.

Its subcellular location is the mitochondrion. In terms of biological role, nuclear-encoded maturase required for splicing of group-II introns in mitochondria. Necessary for mitochondrial biogenesis during early developmental stages. The protein is Nuclear intron maturase 3, mitochondrial of Arabidopsis thaliana (Mouse-ear cress).